Here is an 86-residue protein sequence, read N- to C-terminus: Large ribosomal subunit protein bL31 (86 aa).

This sequence belongs to the bacterial ribosomal protein bL31 family. Type A subfamily. In terms of assembly, part of the 50S ribosomal subunit.

In terms of biological role, binds the 23S rRNA. This chain is Large ribosomal subunit protein bL31, found in Parasynechococcus marenigrum (strain WH8102).